A 292-amino-acid polypeptide reads, in one-letter code: tRNA-cytidine(32) 2-sulfurtransferase (292 aa).

The PP-loop motif signature appears at 53-58 (SGGKDS). Residues Cys128, Cys131, and Cys219 each contribute to the [4Fe-4S] cluster site.

It belongs to the TtcA family. As to quaternary structure, homodimer. Mg(2+) is required as a cofactor. [4Fe-4S] cluster serves as cofactor.

It localises to the cytoplasm. It carries out the reaction cytidine(32) in tRNA + S-sulfanyl-L-cysteinyl-[cysteine desulfurase] + AH2 + ATP = 2-thiocytidine(32) in tRNA + L-cysteinyl-[cysteine desulfurase] + A + AMP + diphosphate + H(+). Its pathway is tRNA modification. Functionally, catalyzes the ATP-dependent 2-thiolation of cytidine in position 32 of tRNA, to form 2-thiocytidine (s(2)C32). The sulfur atoms are provided by the cysteine/cysteine desulfurase (IscS) system. This Cereibacter sphaeroides (strain ATCC 17023 / DSM 158 / JCM 6121 / CCUG 31486 / LMG 2827 / NBRC 12203 / NCIMB 8253 / ATH 2.4.1.) (Rhodobacter sphaeroides) protein is tRNA-cytidine(32) 2-sulfurtransferase.